The sequence spans 254 residues: Phosphoribosylaminoimidazole-succinocarboxamide synthase (254 aa).

It belongs to the SAICAR synthetase family.

It carries out the reaction 5-amino-1-(5-phospho-D-ribosyl)imidazole-4-carboxylate + L-aspartate + ATP = (2S)-2-[5-amino-1-(5-phospho-beta-D-ribosyl)imidazole-4-carboxamido]succinate + ADP + phosphate + 2 H(+). The protein operates within purine metabolism; IMP biosynthesis via de novo pathway; 5-amino-1-(5-phospho-D-ribosyl)imidazole-4-carboxamide from 5-amino-1-(5-phospho-D-ribosyl)imidazole-4-carboxylate: step 1/2. In Sinorhizobium medicae (strain WSM419) (Ensifer medicae), this protein is Phosphoribosylaminoimidazole-succinocarboxamide synthase.